The following is a 192-amino-acid chain: Leucine-rich repeat-containing protein 51 (192 aa).

LRR repeat units follow at residues 49–71, 80–101, and 103–124; these read SLTQ…NQVA, NLAW…LTTF, and NLSV…NKLA. The LRRCT domain maps to 137 to 175; sequence NPMEEEKGYRQYVLCTLSRITTFDFSGVTKADRTTAEVW.

Its subcellular location is the cytoplasm. The polypeptide is Leucine-rich repeat-containing protein 51 (Homo sapiens (Human)).